The chain runs to 399 residues: Subtilisin-like protease 4 (399 aa).

A signal peptide spans 1–19; it reads MVCLKTLSVFLAAFAAADA. A propeptide spanning residues 20–118 is cleaved from the precursor; sequence RAVFKTQGHK…VEQDQVVRIS (99 aa). The 80-residue stretch at 38-117 folds into the Inhibitor I9 domain; sequence YIVVMKDGVS…YVEQDQVVRI (80 aa). N-linked (GlcNAc...) asparagine glycosylation occurs at asparagine 102. A Peptidase S8 domain is found at 128 to 399; sequence SWGLGRVSHR…NRLLYNGSGQ (272 aa). Residues aspartate 160 and histidine 191 each act as charge relay system in the active site. N-linked (GlcNAc...) asparagine glycans are attached at residues asparagine 252 and asparagine 308. Serine 346 (charge relay system) is an active-site residue. A glycan (N-linked (GlcNAc...) asparagine) is linked at asparagine 395.

Belongs to the peptidase S8 family.

The protein localises to the secreted. In terms of biological role, secreted subtilisin-like serine protease with keratinolytic activity that contributes to pathogenicity. This Trichophyton tonsurans (Scalp ringworm fungus) protein is Subtilisin-like protease 4 (SUB4).